We begin with the raw amino-acid sequence, 151 residues long: Deazaflavin-dependent nitroreductase (151 aa).

Residues 54–56, 60–65, 76–79, 87–91, and tyrosine 133 each bind coenzyme F420-(gamma-Glu)n; these read RKT, RVNPLY, AASK, and MWYLN.

Belongs to the F420H(2)-dependent quinone reductase family.

It localises to the cell membrane. The catalysed reaction is oxidized coenzyme F420-(gamma-L-Glu)(n) + a quinol + H(+) = reduced coenzyme F420-(gamma-L-Glu)(n) + a quinone. Involved in a F420-dependent anti-oxidant mechanism that protects M.tuberculosis against oxidative stress and bactericidal agents. Catalyzes the F420H(2)-dependent two-electron reduction of quinones to dihydroquinones, thereby preventing the formation of cytotoxic semiquinones obtained by the one-electron reduction pathway. In vitro, catalyzes the reduction of both benzoquinone and naphthoquinone analogs; since menaquinone is the sole quinone electron carrier in the respiratory chain in M.tuberculosis, the physiological electron acceptor for Fqr-mediated F420H(2) oxidation is therefore likely to be the endogenous menaquinone found in the membrane fraction of M.tuberculosis. Is able to use F420 species with two and five glutamate residues in its polyglutamate tail. Cannot use NADH or NADPH instead of F420H(2) as the electron donor. Its function is as follows. Is involved in the bioreductive activation of bicyclic 4-nitroimidazole prodrugs such as PA-824 and delamanid developed for anti-tuberculosis therapy against both replicating and persistent bacteria. It converts PA-824 into three primary metabolites resulting from reduction of the imidazole ring at C-3; the major one is the corresponding des-nitroimidazole that generates lethal reactive nitrogen species, including nitric oxide (NO), which appears to be responsible for the anaerobic killing activity. Ddn uses the reduced F420 produced by FGD1 to activate PA-824. Delamanid (OPC-67683) is also reduced by Ddn to its des-nitro form. The chain is Deazaflavin-dependent nitroreductase (ddn) from Mycobacterium tuberculosis (strain CDC 1551 / Oshkosh).